Reading from the N-terminus, the 202-residue chain is Ras-related protein Rab-18 (202 aa).

12 residues coordinate GTP: Ser18, Gly21, Lys22, Ser23, Ser24, Asp35, Pro36, Thr41, Gly67, Lys124, Asp126, and Ala153. Residues 38–46 (QAATIGVDF) carry the Effector region motif. 2 S-geranylgeranyl cysteine lipidation sites follow: Cys198 and Cys200.

It belongs to the small GTPase superfamily. Rab family.

It localises to the cell membrane. The enzyme catalyses GTP + H2O = GDP + phosphate + H(+). The small GTPases Rab are key regulators of intracellular membrane trafficking, from the formation of transport vesicles to their fusion with membranes. Rabs cycle between an inactive GDP-bound form and an active GTP-bound form that is able to recruit to membranes different sets of downstream effectors directly responsible for vesicle formation, movement, tethering and fusion. The protein is Ras-related protein Rab-18 (RAB18A) of Lymnaea stagnalis (Great pond snail).